A 773-amino-acid polypeptide reads, in one-letter code: Protein FAM149A (773 aa).

Composition is skewed to low complexity over residues 18-37 and 54-90; these read TSTA…AAAA and LLRA…AAGA. Disordered stretches follow at residues 18–155, 173–210, 232–264, and 568–613; these read TSTA…RELG, DIGE…DSLP, FSSS…TERG, and TQNE…PWRL. Over residues 174–186 the composition is skewed to acidic residues; that stretch reads IGEEGASDGDSGD. Residues 245-264 show a composition bias toward low complexity; the sequence is TSWSGSATQSSTTGSSTERG.

This sequence belongs to the FAM149 family.

The protein is Protein FAM149A (FAM149A) of Homo sapiens (Human).